Consider the following 541-residue polypeptide: Glycogen synthase (541 aa).

ADP-alpha-D-glucose is bound at residue Lys-17. The disordered stretch occupies residues 497-541 (LARPASPPDTAPVGKPARRRRTTALSTTARAHPVARAAGREKIRA).

This sequence belongs to the glycosyltransferase 1 family. Bacterial/plant glycogen synthase subfamily.

The catalysed reaction is [(1-&gt;4)-alpha-D-glucosyl](n) + ADP-alpha-D-glucose = [(1-&gt;4)-alpha-D-glucosyl](n+1) + ADP + H(+). It functions in the pathway glycan biosynthesis; glycogen biosynthesis. In terms of biological role, synthesizes alpha-1,4-glucan chains using ADP-glucose. The sequence is that of Glycogen synthase from Ralstonia nicotianae (strain ATCC BAA-1114 / GMI1000) (Ralstonia solanacearum).